Reading from the N-terminus, the 114-residue chain is Transcription initiation factor IIA subunit 2 (114 aa).

Belongs to the TFIIA subunit 2 family. TFIIA is a heterodimer composed of the large toa1 and the small toa2 subunits.

The protein localises to the nucleus. Its function is as follows. TFIIA is a component of the transcription machinery of RNA polymerase II and plays an important role in transcriptional activation. TFIIA in a complex with tbp mediates transcriptional activity. The sequence is that of Transcription initiation factor IIA subunit 2 (toa2) from Fusarium vanettenii (strain ATCC MYA-4622 / CBS 123669 / FGSC 9596 / NRRL 45880 / 77-13-4) (Fusarium solani subsp. pisi).